The chain runs to 428 residues: D-amino acid dehydrogenase (428 aa).

Position 3-17 (3-17) interacts with FAD; that stretch reads VVILGSGVVGVASAY.

This sequence belongs to the DadA oxidoreductase family. FAD serves as cofactor.

The catalysed reaction is a D-alpha-amino acid + A + H2O = a 2-oxocarboxylate + AH2 + NH4(+). It participates in amino-acid degradation; D-alanine degradation; NH(3) and pyruvate from D-alanine: step 1/1. In terms of biological role, oxidative deamination of D-amino acids. This chain is D-amino acid dehydrogenase, found in Burkholderia thailandensis (strain ATCC 700388 / DSM 13276 / CCUG 48851 / CIP 106301 / E264).